Reading from the N-terminus, the 168-residue chain is ATP synthase subunit b (168 aa).

Residues 11–31 traverse the membrane as a helical segment; it reads EISIINTLWYLIVFSILLLAV.

It belongs to the ATPase B chain family. As to quaternary structure, F-type ATPases have 2 components, F(1) - the catalytic core - and F(0) - the membrane proton channel. F(1) has five subunits: alpha(3), beta(3), gamma(1), delta(1), epsilon(1). F(0) has three main subunits: a(1), b(2) and c(10-14). The alpha and beta chains form an alternating ring which encloses part of the gamma chain. F(1) is attached to F(0) by a central stalk formed by the gamma and epsilon chains, while a peripheral stalk is formed by the delta and b chains.

The protein localises to the cell membrane. Functionally, f(1)F(0) ATP synthase produces ATP from ADP in the presence of a proton or sodium gradient. F-type ATPases consist of two structural domains, F(1) containing the extramembraneous catalytic core and F(0) containing the membrane proton channel, linked together by a central stalk and a peripheral stalk. During catalysis, ATP synthesis in the catalytic domain of F(1) is coupled via a rotary mechanism of the central stalk subunits to proton translocation. Component of the F(0) channel, it forms part of the peripheral stalk, linking F(1) to F(0). The polypeptide is ATP synthase subunit b (Lactobacillus delbrueckii subsp. bulgaricus (strain ATCC 11842 / DSM 20081 / BCRC 10696 / JCM 1002 / NBRC 13953 / NCIMB 11778 / NCTC 12712 / WDCM 00102 / Lb 14)).